A 498-amino-acid polypeptide reads, in one-letter code: Glycerol kinase (498 aa).

ADP is bound at residue Thr-12. Positions 12, 13, and 14 each coordinate ATP. Thr-12 contacts sn-glycerol 3-phosphate. Arg-16 contributes to the ADP binding site. Sn-glycerol 3-phosphate-binding residues include Arg-82, Glu-83, Tyr-134, and Asp-244. Residues Arg-82, Glu-83, Tyr-134, Asp-244, and Gln-245 each coordinate glycerol. 2 residues coordinate ADP: Thr-266 and Gly-310. 4 residues coordinate ATP: Thr-266, Gly-310, Gln-314, and Gly-411. Residues Gly-411 and Asn-415 each coordinate ADP.

The protein belongs to the FGGY kinase family.

The enzyme catalyses glycerol + ATP = sn-glycerol 3-phosphate + ADP + H(+). It participates in polyol metabolism; glycerol degradation via glycerol kinase pathway; sn-glycerol 3-phosphate from glycerol: step 1/1. With respect to regulation, inhibited by fructose 1,6-bisphosphate (FBP). Functionally, key enzyme in the regulation of glycerol uptake and metabolism. Catalyzes the phosphorylation of glycerol to yield sn-glycerol 3-phosphate. This is Glycerol kinase from Roseiflexus sp. (strain RS-1).